A 542-amino-acid polypeptide reads, in one-letter code: Prolyl 3-hydroxylase OGFOD1 (542 aa).

One can recognise a Fe2OG dioxygenase domain in the interval 134–239 (DLESTIDMSC…RLSISGWFHG (106 aa)). H155 and D157 together coordinate Fe cation. Y169 is a 2-oxoglutarate binding site. H218 contacts Fe cation. R230 lines the 2-oxoglutarate pocket. Residues 371-435 (SEDEPEDKKE…AKKESSVPTC (65 aa)) form a disordered region. Polar residues predominate over residues 395–417 (SHSSSEPENSWAATSDSSLQSEG).

The protein belongs to the TPA1 family. In terms of assembly, monomer. It depends on Fe(2+) as a cofactor. The cofactor is L-ascorbate.

The protein localises to the cytoplasm. The protein resides in the nucleus. The enzyme catalyses [ribosomal protein uS12]-L-proline + 2-oxoglutarate + O2 = [ribosomal protein uS12]-(3S)-3-hydroxy-L-proline + succinate + CO2. Its function is as follows. Prolyl 3-hydroxylase that catalyzes 3-hydroxylation of 'Pro-62' of small ribosomal subunit uS12 (RPS23), thereby regulating protein translation termination efficiency. Involved in stress granule formation. The protein is Prolyl 3-hydroxylase OGFOD1 (OGFOD1) of Bos taurus (Bovine).